Reading from the N-terminus, the 128-residue chain is Small ribosomal subunit protein bS6 (128 aa).

It belongs to the bacterial ribosomal protein bS6 family.

Binds together with bS18 to 16S ribosomal RNA. This is Small ribosomal subunit protein bS6 from Leifsonia xyli subsp. xyli (strain CTCB07).